The chain runs to 314 residues: Dihydropteroate synthase (314 aa).

Positions 10 to 294 (TVICGIINVT…DVASHRMAVE (285 aa)) constitute a Pterin-binding domain. Residue Asn-17 coordinates Mg(2+). (7,8-dihydropterin-6-yl)methyl diphosphate contacts are provided by residues Asp-91, Asn-110, Asp-201, Lys-237, and 282–284 (RVH).

Belongs to the DHPS family. Homodimer. Mg(2+) is required as a cofactor.

The enzyme catalyses (7,8-dihydropterin-6-yl)methyl diphosphate + 4-aminobenzoate = 7,8-dihydropteroate + diphosphate. It functions in the pathway cofactor biosynthesis; tetrahydrofolate biosynthesis; 7,8-dihydrofolate from 2-amino-4-hydroxy-6-hydroxymethyl-7,8-dihydropteridine diphosphate and 4-aminobenzoate: step 1/2. Its activity is regulated as follows. Is potently inhibited by sulfonamides, with Ki values between 25 nM and 850 nM. Functionally, catalyzes the condensation of para-aminobenzoate (pABA) with 6-hydroxymethyl-7,8-dihydropterin diphosphate (DHPt-PP) to form 7,8-dihydropteroate, the immediate precursor of folate derivatives. Is the target for the sulfonamide group of antimicrobial drugs. Sulfonamide drugs act as pABA analogs, they inhibit the reaction by acting as alternative substrates, leading to a 'dead end' sulfa-pterin product. The sequence is that of Dihydropteroate synthase (sulA) from Streptococcus pneumoniae (strain ATCC BAA-255 / R6).